A 215-amino-acid polypeptide reads, in one-letter code: Deoxyribose-phosphate aldolase (215 aa).

D90 acts as the Proton donor/acceptor in catalysis. The active-site Schiff-base intermediate with acetaldehyde is K152. Residue K181 is the Proton donor/acceptor of the active site.

It belongs to the DeoC/FbaB aldolase family. DeoC type 1 subfamily.

It localises to the cytoplasm. It carries out the reaction 2-deoxy-D-ribose 5-phosphate = D-glyceraldehyde 3-phosphate + acetaldehyde. It functions in the pathway carbohydrate degradation; 2-deoxy-D-ribose 1-phosphate degradation; D-glyceraldehyde 3-phosphate and acetaldehyde from 2-deoxy-alpha-D-ribose 1-phosphate: step 2/2. Its function is as follows. Catalyzes a reversible aldol reaction between acetaldehyde and D-glyceraldehyde 3-phosphate to generate 2-deoxy-D-ribose 5-phosphate. In Ureaplasma urealyticum serovar 10 (strain ATCC 33699 / Western), this protein is Deoxyribose-phosphate aldolase.